The following is a 222-amino-acid chain: Uridine diphosphate glucose pyrophosphatase NUDT14 (222 aa).

The Nudix hydrolase domain occupies Lys-38–Phe-206. The short motif at Pro-111–Tyr-129 is the Nudix box element.

It belongs to the Nudix hydrolase family. In terms of assembly, homodimer. Requires Mg(2+) as cofactor.

The protein localises to the cytoplasm. The catalysed reaction is UDP-sugar + H2O = UMP + alpha-D-aldose 1-phosphate.. Hydrolyzes UDP-glucose to glucose 1-phosphate and UMP and ADP-ribose to ribose 5-phosphate and AMP. The physiological substrate is probably UDP-glucose. Poor activity on other substrates such as ADP-glucose, CDP-glucose, GDP-glucose and GDP-mannose. This is Uridine diphosphate glucose pyrophosphatase NUDT14 (NUDT14) from Homo sapiens (Human).